A 307-amino-acid chain; its full sequence is Thiohydrolase apmlB (307 aa).

It belongs to the polyketide transferase af380 family.

Functionally, thiohydrolase; part of the gene cluster that mediates the biosynthesis of phaeospelide A, a fungal polyene macrolide with a 34-membered macrolactone ring and an all-trans conjugated hexaene structure. The HR-PKS ApmlA uses acetyl-CoA and malonyl-CoA as its starter and extender units, respectively, and provides the large carbon framework in phaeospelide via 16 cycles of polyketide chain elongation, which is the largest number identified in fungal iterative PKSs thus far. During round 1, the KR domain reduces beta -ketone to an L-oriented hydroxy group, while during later rounds, it provides hydroxy groups in the D-configuration. The characteristic conjugated hexaene moiety is built during the later rounds (10-15), when the KR and DH domains are at work but ER is off. Phylogenetic analysis of the DH domain suggests that a polyene formation is programmed in the DH domain. Finally, the mature ACP-tethered carbon chain is transferred to the serine residue of the thiohydrolase apmlB, followed by intramolecular macrolactonization, generating phaeospelide A. When one elongation cycle during rounds 7-9 is skipped, phaeospelide B is biosynthesized instead. This Arthrinium phaeospermum (Gymnosporium phaeospermum) protein is Thiohydrolase apmlB.